The sequence spans 615 residues: tRNA uridine 5-carboxymethylaminomethyl modification enzyme MnmG (615 aa).

11–16 provides a ligand contact to FAD; it reads GLGHAG. 278–292 contacts NAD(+); the sequence is GPRYCPSLEDKVVRF.

It belongs to the MnmG family. Homodimer. Heterotetramer of two MnmE and two MnmG subunits. Requires FAD as cofactor.

Its subcellular location is the cytoplasm. Its function is as follows. NAD-binding protein involved in the addition of a carboxymethylaminomethyl (cmnm) group at the wobble position (U34) of certain tRNAs, forming tRNA-cmnm(5)s(2)U34. The chain is tRNA uridine 5-carboxymethylaminomethyl modification enzyme MnmG from Myxococcus xanthus (strain DK1622).